A 1196-amino-acid polypeptide reads, in one-letter code: Calcium-activated potassium channel subunit alpha-1 (1196 aa).

Residues 1–52 (MATWNASQIILNSMSNIIESPQSKPRPVMASNGASLFIPVTMEVPCDQGTRM) are Extracellular-facing. The helical transmembrane segment at 53–73 (WWAFLASSMVTFFGGLFIILV) threads the bilayer. Residues 74–146 (WRTFKYLWTV…MISAQTLTGR (73 aa)) are Cytoplasmic-facing. The chain crosses the membrane as a helical span at residues 147-167 (VLVVTVFALSIGALMIYFIDS). Over 168–182 (SNPIESCQNFYKDFT) the chain is Extracellular. The chain crosses the membrane as a helical span at residues 183–203 (LQIDMAFNIFFLLYFGLRFIA). The Cytoplasmic segment spans residues 204–207 (ANDK). Residues 208 to 228 (LWFWLEVNSVVDFFTVPPVFV) traverse the membrane as a helical segment. The Extracellular segment spans residues 229-232 (SVYL). Residues 233–253 (NRSWLGLRFLRALRLIQFSEI) traverse the membrane as a helical; Voltage-sensor segment. Residues 254-268 (LQFLNILKTSNSIKL) lie on the Cytoplasmic side of the membrane. A helical membrane pass occupies residues 269 to 289 (VNLCSIFISTWLTAAGFIHLV). The Extracellular portion of the chain corresponds to 290–303 (ENSGDPWRNFENSQ). The segment at residues 304-326 (DLSYWECMYLLMVTMSTVGYGDV) is an intramembrane region (pore-forming). A Selectivity for potassium motif is present at residues 320-323 (TVGY). The Extracellular portion of the chain corresponds to 327–335 (YAKTTLGRL). The helical transmembrane segment at 336-356 (FMVFFILGGLAMFASYVPEII) threads the bilayer. Over 357–1196 (ELIGNRKKYG…PPIREVEDEC (840 aa)) the chain is Cytoplasmic. The region spanning 375 to 517 (RKHIVVCGHI…WNWKDGDDAI (143 aa)) is the RCK N-terminal 1 domain. The Mg(2+) site is built by Glu407, Gln430, and Glu432. The segment at 524 to 544 (LGFIAQSCLAQGLSTMLANLF) is segment S7. Residues 581–601 (LSFPAVCELCFVKLKLLMIAI) form a segment S8 region. The interval 645–649 (CKACH) is heme-binding motif. Residues 672 to 697 (SALSPKKKQRNGGMRHSPNTSPNMMR) are disordered. The interval 748 to 768 (VLSGHVVVCIFGDMTSALIGV) is segment S9. In terms of domain architecture, RCK N-terminal 2 spans 750–894 (SGHVVVCIFG…MERSSPDNSP (145 aa)). The short motif at 914–936 (TELVNDSNVQFLDQDDDDDPDTE) is the Calcium bowl element. Ca(2+) contacts are provided by Gln923, Asp926, Asp929, and Asp931. Residues 943-963 (FACGTAFAVSVLDSLMSATYF) form a segment S10 region. Positions 1098 to 1119 (ASLSHSSHSSHSSSKKSSSVTS) are enriched in low complexity. Positions 1098–1149 (ASLSHSSHSSHSSSKKSSSVTSILHTASANRQNRVKARDSRDKQKMGQAEKK) are disordered. Polar residues predominate over residues 1120–1129 (ILHTASANRQ). Basic and acidic residues predominate over residues 1133 to 1149 (KARDSRDKQKMGQAEKK).

Belongs to the potassium channel family. Calcium-activated (TC 1.A.1.3) subfamily. KCa1.1/KCNMA1 sub-subfamily. In terms of assembly, homotetramer; which constitutes the calcium-activated potassium channel. As to expression, expressed in both the somites and neural tube of 1 day embryos. Within the nervous system, it is restricted to dorsal parts, and expressed centrally in regions dedicated to processing of sensory information. Six hours later, it is expressed segmentally within the somites. At this time, it is expressed in a primary sensory organ, the trigeminal ganglion. By 2 days, it is also expressed in other primary sensory organs, such as the otic vesicle, and the eye. Within the retina, it is expressed to an internal layer. In the developing otic vesicle, it is abundantly expressed near the apical surface. Isoform 3 is neural-specific, and is only expressed during late stages of neuronal differentiation.

Its subcellular location is the cell membrane. The enzyme catalyses K(+)(in) = K(+)(out). Its activity is regulated as follows. Ethanol and carbon monoxide-bound heme increase channel activation. Heme inhibits channel activation. Functionally, potassium channel activated by both membrane depolarization or increase in cytosolic Ca(2+) that mediates export of K(+). It is also activated by the concentration of cytosolic Mg(2+). Its activation dampens the excitatory events that elevate the cytosolic Ca(2+) concentration and/or depolarize the cell membrane. It therefore contributes to repolarization of the membrane potential. Plays a key role in controlling excitability in a number of systems, such as regulation of the contraction of smooth muscle, the tuning of hair cells in the cochlea, regulation of transmitter release, and innate immunity. In smooth muscles, its activation by high level of Ca(2+), caused by ryanodine receptors in the sarcoplasmic reticulum, regulates the membrane potential. In cochlea cells, its number and kinetic properties partly determine the characteristic frequency of each hair cell and thereby helps to establish a tonotopic map. Highly sensitive to both iberiotoxin (IbTx) and charybdotoxin (CTX). In Xenopus laevis (African clawed frog), this protein is Calcium-activated potassium channel subunit alpha-1 (kcnma1).